The primary structure comprises 274 residues: Putative phosphoenolpyruvate synthase regulatory protein (274 aa).

157 to 164 (GVSRCGKT) provides a ligand contact to ADP.

It belongs to the pyruvate, phosphate/water dikinase regulatory protein family. PSRP subfamily.

It carries out the reaction [pyruvate, water dikinase] + ADP = [pyruvate, water dikinase]-phosphate + AMP + H(+). The catalysed reaction is [pyruvate, water dikinase]-phosphate + phosphate + H(+) = [pyruvate, water dikinase] + diphosphate. Functionally, bifunctional serine/threonine kinase and phosphorylase involved in the regulation of the phosphoenolpyruvate synthase (PEPS) by catalyzing its phosphorylation/dephosphorylation. The polypeptide is Putative phosphoenolpyruvate synthase regulatory protein (Bordetella avium (strain 197N)).